Reading from the N-terminus, the 288-residue chain is Nucleotide-binding protein NE1849 (288 aa).

8–15 (GLSGSGKS) lines the ATP pocket. 57-60 (DMRS) lines the GTP pocket.

The protein belongs to the RapZ-like family.

Functionally, displays ATPase and GTPase activities. This chain is Nucleotide-binding protein NE1849, found in Nitrosomonas europaea (strain ATCC 19718 / CIP 103999 / KCTC 2705 / NBRC 14298).